The primary structure comprises 418 residues: MINQSIWRSNFRILWLSQFIAIAGLTVLVPLLPIYMASLQNLSVVEIQLWSGIAIAAPAVTTMIASPIWGKLGDKISRKWMVLRALLGLAVCLFLMALCTTPLQFVLVRLLQGLFGGVVDASSAFASAEAPAEDRGKVLGRLQSSVSAGSLVGPLIGGVTASILGFSALLMSIAVITFIVCIFGALKLIETTHMPKSQTPNINKGIRRSFQCLLCTQQTCRFIIVGVLANFAMYGMLTALSPLASSVNHTAIDDRSVIGFLQSAFWTASILSAPLWGRFNDKSYVKSVYIFATIACGCSAILQGLATNIEFLMAARILQGLTYSALIQSVMFVVVNACHQQLKGTFVGTTNSMLVVGQIIGSLSGAAITSYTTPATTFIVMGVVFAVSSLFLICSTITNQINDHTLMKLWELKQKSAK.

10 consecutive transmembrane segments (helical) span residues 19–39 (FIAI…MASL), 49–69 (LWSG…SPIW), 88–108 (GLAV…FVLV), 163–183 (ILGF…VCIF), 222–242 (FIIV…ALSP), 257–277 (VIGF…PLWG), 287–307 (SVYI…GLAT), 317–337 (ILQG…VVNA), 353–373 (MLVV…SYTT), and 377–397 (TFIV…CSTI).

Belongs to the major facilitator superfamily.

The protein localises to the cell membrane. Functionally, involved in staphyloferrin B secretion. The chain is Staphyloferrin B transporter from Staphylococcus aureus (strain NCTC 8325 / PS 47).